Consider the following 94-residue polypeptide: MFQVNEYFNGTVKSIAFSGEEGPATVGVMAPGEYEFGTAKREIMHVVSGALTVKLPGSDNWETFNAGDKFNVPADSKFQLQVKVDTAYLCEYRD.

It belongs to the nucleoside phosphorylase PpnP family.

The enzyme catalyses a purine D-ribonucleoside + phosphate = a purine nucleobase + alpha-D-ribose 1-phosphate. It carries out the reaction adenosine + phosphate = alpha-D-ribose 1-phosphate + adenine. It catalyses the reaction cytidine + phosphate = cytosine + alpha-D-ribose 1-phosphate. The catalysed reaction is guanosine + phosphate = alpha-D-ribose 1-phosphate + guanine. The enzyme catalyses inosine + phosphate = alpha-D-ribose 1-phosphate + hypoxanthine. It carries out the reaction thymidine + phosphate = 2-deoxy-alpha-D-ribose 1-phosphate + thymine. It catalyses the reaction uridine + phosphate = alpha-D-ribose 1-phosphate + uracil. The catalysed reaction is xanthosine + phosphate = alpha-D-ribose 1-phosphate + xanthine. Functionally, catalyzes the phosphorolysis of diverse nucleosides, yielding D-ribose 1-phosphate and the respective free bases. Can use uridine, adenosine, guanosine, cytidine, thymidine, inosine and xanthosine as substrates. Also catalyzes the reverse reactions. The sequence is that of Pyrimidine/purine nucleoside phosphorylase from Pseudomonas putida (strain ATCC 700007 / DSM 6899 / JCM 31910 / BCRC 17059 / LMG 24140 / F1).